Reading from the N-terminus, the 616-residue chain is uncharacterized protein (616 aa).

Belongs to the UbiD family.

This is an uncharacterized protein from Helicobacter pylori (strain ATCC 700392 / 26695) (Campylobacter pylori).